The chain runs to 202 residues: V-type proton ATPase subunit E (202 aa).

This sequence belongs to the V-ATPase E subunit family.

Produces ATP from ADP in the presence of a proton gradient across the membrane. This chain is V-type proton ATPase subunit E, found in Halothermothrix orenii (strain H 168 / OCM 544 / DSM 9562).